Reading from the N-terminus, the 304-residue chain is Sulfate adenylyltransferase subunit 2 (304 aa).

It belongs to the PAPS reductase family. CysD subfamily. In terms of assembly, heterodimer composed of CysD, the smaller subunit, and CysN.

It catalyses the reaction sulfate + ATP + H(+) = adenosine 5'-phosphosulfate + diphosphate. The protein operates within sulfur metabolism; hydrogen sulfide biosynthesis; sulfite from sulfate: step 1/3. In terms of biological role, with CysN forms the ATP sulfurylase (ATPS) that catalyzes the adenylation of sulfate producing adenosine 5'-phosphosulfate (APS) and diphosphate, the first enzymatic step in sulfur assimilation pathway. APS synthesis involves the formation of a high-energy phosphoric-sulfuric acid anhydride bond driven by GTP hydrolysis by CysN coupled to ATP hydrolysis by CysD. The chain is Sulfate adenylyltransferase subunit 2 from Acinetobacter baylyi (strain ATCC 33305 / BD413 / ADP1).